The following is a 186-amino-acid chain: Quinone reductase (186 aa).

FMN-binding positions include 13 to 20 (SLRKESYN), 80 to 83 (EYNR), and Ser-116.

This sequence belongs to the SsuE family. In terms of assembly, homotetramer. Dimer of dimers. The tetrameric configuration has a central role in chromate reductase activity. It depends on FMN as a cofactor.

It carries out the reaction a quinone + NADH + H(+) = a quinol + NAD(+). The catalysed reaction is a quinone + NADPH + H(+) = a quinol + NADP(+). The enzyme catalyses Cr(6+) + 2 NADH + O2 = Cr(3+) + superoxide + 2 NAD(+) + 2 H(+). It catalyses the reaction Cr(6+) + 2 NADPH + O2 = Cr(3+) + superoxide + 2 NADP(+) + 2 H(+). Its activity is regulated as follows. May be inhibited by divalent cations. Functionally, catalyzes the reduction of quinones. Acts by simultaneous two-electron transfer, avoiding formation of highly reactive semiquinone intermediates and producing quinols that promote tolerance of H(2)O(2). Quinone reduction is probably the primary biological role of ChrR. Can also reduce toxic chromate to insoluble and less toxic Cr(3+). Catalyzes the transfer of three electrons to Cr(6+) producing Cr(3+) and one electron to molecular oxygen. This reaction produces transiently a minimal amount of the toxic Cr(5+) species and reactive oxygen species (ROS). Chromate reduction protects the cell against chromate toxicity, but is likely a secondary activity. Can also reduce potassium ferricyanide and 2,6-dichloroindophenol. During chromate reduction, displays an eightfold preference for NADH over NADPH. The polypeptide is Quinone reductase (Pseudomonas putida (strain ATCC 47054 / DSM 6125 / CFBP 8728 / NCIMB 11950 / KT2440)).